Here is a 344-residue protein sequence, read N- to C-terminus: Bifunctional trans-3-hydroxy-L-proline dehydratase/2-epimerase (344 aa).

S90 (proton acceptor) is an active-site residue. Substrate is bound by residues 91–92 (GS), D252, and 257–258 (GT).

The protein belongs to the proline racemase family.

It carries out the reaction trans-3-hydroxy-L-proline = 1-pyrroline-2-carboxylate + H2O. The catalysed reaction is trans-3-hydroxy-L-proline = cis-3-hydroxy-D-proline. Bifunctional enzyme catalyzing both the dehydration of trans-3-hydroxy-L-proline (t3LHyp) to Delta(1)-pyrroline-2-carboxylate (Pyr2C) and 2-epimerization of t3LHyp to cis-3-hydroxy-D-proline (c3DHyp). No dehydratase activity with L-proline, trans-4-hydroxy-L-proline (t4LHyp), cis-4-hydroxy-L-proline (c4LHyp), D-proline, cis-4-hydroxy-D-proline (c4DHyp), trans-4-hydroxy-D-proline (t4DHyp) or L-serine as substrates. Displays neither t4LHyp epimerase nor proline racemase activity. Is likely involved in a degradation pathway that converts t3LHyp to L-proline, which would allow P.aeruginosa to grow on t3LHyp as a sole carbon source. The polypeptide is Bifunctional trans-3-hydroxy-L-proline dehydratase/2-epimerase (Pseudomonas aeruginosa (strain ATCC 15692 / DSM 22644 / CIP 104116 / JCM 14847 / LMG 12228 / 1C / PRS 101 / PAO1)).